We begin with the raw amino-acid sequence, 247 residues long: EGF-like domain-containing protein C02B10.3 (247 aa).

A signal peptide spans 1–17; sequence MTGALCIVLFGVTMVTA. At 18 to 220 the chain is on the extracellular side; the sequence is ERPKIKDTHG…LCDKRCQKGH (203 aa). EGF-like domains are found at residues 114–150 and 180–213; these read FGTS…RFCE and SGAS…DLCD. 4 disulfide bridges follow: Cys123/Cys138, Cys140/Cys149, Cys190/Cys201, and Cys203/Cys212. Asn126 carries N-linked (GlcNAc...) asparagine glycosylation. The helical transmembrane segment at 221–240 threads the bilayer; the sequence is VTCSTCSSFIPAALFAIILL. Topologically, residues 241-247 are cytoplasmic; sequence CVNKFNY.

The protein resides in the membrane. This Caenorhabditis elegans protein is EGF-like domain-containing protein C02B10.3.